The sequence spans 554 residues: Hydroxylamine reductase (554 aa).

Residues Cys-3, Cys-6, Cys-18, and Cys-25 each contribute to the [2Fe-2S] cluster site. Hybrid [4Fe-2O-2S] cluster contacts are provided by His-252, Glu-276, Cys-320, Cys-408, Cys-436, Cys-461, Glu-495, and Lys-497. Cys-408 carries the post-translational modification Cysteine persulfide.

It belongs to the HCP family. Requires [2Fe-2S] cluster as cofactor. It depends on hybrid [4Fe-2O-2S] cluster as a cofactor.

It is found in the cytoplasm. The catalysed reaction is A + NH4(+) + H2O = hydroxylamine + AH2 + H(+). In terms of biological role, catalyzes the reduction of hydroxylamine to form NH(3) and H(2)O. The sequence is that of Hydroxylamine reductase from Shewanella baltica (strain OS195).